The following is a 174-amino-acid chain: Chorismate pyruvate-lyase (174 aa).

Positions 36, 78, 116, and 157 each coordinate substrate.

It belongs to the UbiC family. Monomer.

The protein resides in the cytoplasm. It carries out the reaction chorismate = 4-hydroxybenzoate + pyruvate. The protein operates within cofactor biosynthesis; ubiquinone biosynthesis. In terms of biological role, removes the pyruvyl group from chorismate, with concomitant aromatization of the ring, to provide 4-hydroxybenzoate (4HB) for the ubiquinone pathway. The chain is Chorismate pyruvate-lyase from Serratia proteamaculans (strain 568).